We begin with the raw amino-acid sequence, 163 residues long: Urease accessory protein UreE (163 aa).

The disordered stretch occupies residues Gln-144 to His-163.

It belongs to the UreE family.

The protein resides in the cytoplasm. Its function is as follows. Involved in urease metallocenter assembly. Binds nickel. Probably functions as a nickel donor during metallocenter assembly. This Aliivibrio fischeri (strain MJ11) (Vibrio fischeri) protein is Urease accessory protein UreE.